A 21-amino-acid chain; its full sequence is 20 kDa chaperonin, chloroplastic (21 aa).

It belongs to the GroES chaperonin family. As to quaternary structure, forms stable complexes with CPN60 in the presence of ATP.

The protein localises to the plastid. It localises to the chloroplast. Functionally, seems to function only as a co-chaperone, along with cpn60, and in certain cases is essential for the discharge of biologically active proteins from cpn60. This Pisum sativum (Garden pea) protein is 20 kDa chaperonin, chloroplastic (CPN21).